The sequence spans 90 residues: Probable Fe(2+)-trafficking protein (90 aa).

This sequence belongs to the Fe(2+)-trafficking protein family.

Its function is as follows. Could be a mediator in iron transactions between iron acquisition and iron-requiring processes, such as synthesis and/or repair of Fe-S clusters in biosynthetic enzymes. This is Probable Fe(2+)-trafficking protein from Nitrosomonas eutropha (strain DSM 101675 / C91 / Nm57).